Here is a 245-residue protein sequence, read N- to C-terminus: Orotidine 5'-phosphate decarboxylase (245 aa).

Substrate is bound by residues aspartate 22, lysine 44, 71-80, threonine 131, arginine 192, glutamine 201, glycine 221, and arginine 222; that span reads DLKFHDIPNT. Lysine 73 acts as the Proton donor in catalysis.

This sequence belongs to the OMP decarboxylase family. Type 1 subfamily. Homodimer.

It carries out the reaction orotidine 5'-phosphate + H(+) = UMP + CO2. Its pathway is pyrimidine metabolism; UMP biosynthesis via de novo pathway; UMP from orotate: step 2/2. Its function is as follows. Catalyzes the decarboxylation of orotidine 5'-monophosphate (OMP) to uridine 5'-monophosphate (UMP). The polypeptide is Orotidine 5'-phosphate decarboxylase (Escherichia coli O139:H28 (strain E24377A / ETEC)).